The following is a 110-amino-acid chain: UPF0122 protein STER_0914 (110 aa).

The protein belongs to the UPF0122 family.

Functionally, might take part in the signal recognition particle (SRP) pathway. This is inferred from the conservation of its genetic proximity to ftsY/ffh. May be a regulatory protein. In Streptococcus thermophilus (strain ATCC BAA-491 / LMD-9), this protein is UPF0122 protein STER_0914.